We begin with the raw amino-acid sequence, 120 residues long: Myohemerythrin (120 aa).

Fe cation contacts are provided by histidine 26, histidine 56, glutamate 60, histidine 75, histidine 79, histidine 108, and aspartate 113.

Belongs to the hemerythrin family.

Functionally, myohemerythrin is an oxygen-binding protein found in the retractor muscles of certain worms. The oxygen-binding site contains two iron atoms. The sequence is that of Myohemerythrin from Riftia pachyptila (Vent tube worm).